Here is a 291-residue protein sequence, read N- to C-terminus: Heterogeneous nuclear ribonucleoprotein D-like-B (291 aa).

RRM domains are found at residues 34 to 116 and 119 to 196; these read SKMF…QGKE and KKVF…AAQP. Residues 196-226 are disordered; it reads PKEVYRQQQQKQQKGGRGGTRGRGRGQGYSN. Positions 210 to 222 are enriched in gly residues; that stretch reads GGRGGTRGRGRGQ.

The protein resides in the nucleus. It localises to the cytoplasm. In terms of biological role, acts as a transcriptional regulator. Binds DNA and RNA. The sequence is that of Heterogeneous nuclear ribonucleoprotein D-like-B (hnrnpdl-b) from Xenopus laevis (African clawed frog).